A 729-amino-acid polypeptide reads, in one-letter code: Fatty acid oxidation complex subunit alpha (729 aa).

Positions 1–189 are enoyl-CoA hydratase/isomerase; sequence MLYQGESLYL…KVGLVQAVVA (189 aa). Residue Asp296 coordinates substrate. Residues 311-729 are 3-hydroxyacyl-CoA dehydrogenase; the sequence is PVPQQAAVLG…HADVSHGQPA (419 aa). Residues Met324, Asp343, 400-402, Lys407, and Ser429 contribute to the NAD(+) site; that span reads VVE. His450 acts as the For 3-hydroxyacyl-CoA dehydrogenase activity in catalysis. An NAD(+)-binding site is contributed by Asn453. Positions 500 and 660 each coordinate substrate.

The protein in the N-terminal section; belongs to the enoyl-CoA hydratase/isomerase family. In the C-terminal section; belongs to the 3-hydroxyacyl-CoA dehydrogenase family. In terms of assembly, heterotetramer of two alpha chains (FadB) and two beta chains (FadA).

The enzyme catalyses a (3S)-3-hydroxyacyl-CoA + NAD(+) = a 3-oxoacyl-CoA + NADH + H(+). The catalysed reaction is a (3S)-3-hydroxyacyl-CoA = a (2E)-enoyl-CoA + H2O. It catalyses the reaction a 4-saturated-(3S)-3-hydroxyacyl-CoA = a (3E)-enoyl-CoA + H2O. It carries out the reaction (3S)-3-hydroxybutanoyl-CoA = (3R)-3-hydroxybutanoyl-CoA. The enzyme catalyses a (3Z)-enoyl-CoA = a 4-saturated (2E)-enoyl-CoA. The catalysed reaction is a (3E)-enoyl-CoA = a 4-saturated (2E)-enoyl-CoA. The protein operates within lipid metabolism; fatty acid beta-oxidation. Involved in the aerobic and anaerobic degradation of long-chain fatty acids via beta-oxidation cycle. Catalyzes the formation of 3-oxoacyl-CoA from enoyl-CoA via L-3-hydroxyacyl-CoA. It can also use D-3-hydroxyacyl-CoA and cis-3-enoyl-CoA as substrate. In Pectobacterium atrosepticum (strain SCRI 1043 / ATCC BAA-672) (Erwinia carotovora subsp. atroseptica), this protein is Fatty acid oxidation complex subunit alpha.